A 946-amino-acid polypeptide reads, in one-letter code: DNA primase (946 aa).

The disordered stretch occupies residues 596–626 (RDTEEDEDGKENKNNVPDNGVFQKTTSSVDT). Over residues 617–626 (FQKTTSSVDT) the composition is skewed to polar residues. The segment at 881–920 (CLNYTHRNPQETVQVFIDLRTEHSYALWASLWSRCFTKKC) adopts a CHC2-type zinc-finger fold.

It belongs to the herpesviridae DNA primase family. In terms of assembly, associates with the helicase and the primase-associated factor to form the helicase-primase factor. Interacts with host SNAPIN.

The protein resides in the host nucleus. Its function is as follows. Essential component of the helicase/primase complex. Unwinds the DNA at the replication forks and generates single-stranded DNA for both leading and lagging strand synthesis. The primase initiates primer synthesis and thereby produces large amount of short RNA primers on the lagging strand that the polymerase elongates using dNTPs. This Homo sapiens (Human) protein is DNA primase (UL70).